A 917-amino-acid polypeptide reads, in one-letter code: Thiamine biosynthesis bifunctional protein ThiEC (917 aa).

Positions 1-243 are thiamine-phosphate synthase; that stretch reads MSNEYPYASM…EGWKAVRGDK (243 aa). Residues 48–52 and D84 contribute to the 4-amino-2-methyl-5-(diphosphooxymethyl)pyrimidine site; that span reads QLRAK. Mg(2+) is bound by residues D85 and D109. Residue S128 participates in 4-amino-2-methyl-5-(diphosphooxymethyl)pyrimidine binding. 157–159 provides a ligand contact to 2-[(2R,5Z)-2-carboxy-4-methylthiazol-5(2H)-ylidene]ethyl phosphate; that stretch reads STT. K160 serves as a coordination point for 4-amino-2-methyl-5-(diphosphooxymethyl)pyrimidine. Residues G196 and 216–217 each bind 2-[(2R,5Z)-2-carboxy-4-methylthiazol-5(2H)-ylidene]ethyl phosphate; that span reads VS. Residues 256-311 are disordered; that stretch reads PATDTQAAQEGAAKPGSEATEKKFTNAKDAKDAQKLAKQQRVDIAARGSKQRDKAH. A phosphomethylpyrimidine synthase region spans residues 271 to 917; that stretch reads GSEATEKKFT…GGKLYSTAQE (647 aa). Residues 274 to 290 show a composition bias toward basic and acidic residues; the sequence is ATEKKFTNAKDAKDAQK. Residues N487, M516, Y545, H581, 601-603, 642-645, and E681 each bind 5-amino-1-(5-phospho-beta-D-ribosyl)imidazole; these read SRG and DGLR. A Zn(2+)-binding site is contributed by H685. Residue Y708 coordinates 5-amino-1-(5-phospho-beta-D-ribosyl)imidazole. H749 contacts Zn(2+). 3 residues coordinate [4Fe-4S] cluster: C829, C832, and C837.

In the N-terminal section; belongs to the thiamine-phosphate synthase family. The protein in the C-terminal section; belongs to the ThiC family. It depends on [4Fe-4S] cluster as a cofactor.

The catalysed reaction is 2-[(2R,5Z)-2-carboxy-4-methylthiazol-5(2H)-ylidene]ethyl phosphate + 4-amino-2-methyl-5-(diphosphooxymethyl)pyrimidine + 2 H(+) = thiamine phosphate + CO2 + diphosphate. It carries out the reaction 2-(2-carboxy-4-methylthiazol-5-yl)ethyl phosphate + 4-amino-2-methyl-5-(diphosphooxymethyl)pyrimidine + 2 H(+) = thiamine phosphate + CO2 + diphosphate. The enzyme catalyses 4-methyl-5-(2-phosphooxyethyl)-thiazole + 4-amino-2-methyl-5-(diphosphooxymethyl)pyrimidine + H(+) = thiamine phosphate + diphosphate. It catalyses the reaction 5-amino-1-(5-phospho-beta-D-ribosyl)imidazole + S-adenosyl-L-methionine = 4-amino-2-methyl-5-(phosphooxymethyl)pyrimidine + CO + 5'-deoxyadenosine + formate + L-methionine + 3 H(+). It functions in the pathway cofactor biosynthesis; thiamine diphosphate biosynthesis; thiamine phosphate from 4-amino-2-methyl-5-diphosphomethylpyrimidine and 4-methyl-5-(2-phosphoethyl)-thiazole: step 1/1. Functionally, condenses 4-methyl-5-(beta-hydroxyethyl)thiazole monophosphate (THZ-P) and 2-methyl-4-amino-5-hydroxymethyl pyrimidine pyrophosphate (HMP-PP) to form thiamine monophosphate (TMP). In terms of biological role, catalyzes the synthesis of the hydroxymethylpyrimidine phosphate (HMP-P) moiety of thiamine from aminoimidazole ribotide (AIR) in a radical S-adenosyl-L-methionine (SAM)-dependent reaction. The polypeptide is Thiamine biosynthesis bifunctional protein ThiEC (thiE/thiC) (Bifidobacterium longum (strain NCC 2705)).